The primary structure comprises 320 residues: Probable protein adenylyltransferase aq_aa38 (320 aa).

A Fido domain is found at 76-206; it reads VSEALILWIY…AIVVVEKLSR (131 aa). ATP contacts are provided by residues 100–101, 157–159, and R163; these read KS and GNG.

It belongs to the fic family.

It catalyses the reaction L-tyrosyl-[protein] + ATP = O-(5'-adenylyl)-L-tyrosyl-[protein] + diphosphate. The enzyme catalyses L-threonyl-[protein] + ATP = 3-O-(5'-adenylyl)-L-threonyl-[protein] + diphosphate. Its function is as follows. Probable adenylyltransferase that mediates the addition of adenosine 5'-monophosphate (AMP) to specific residues of target proteins. The polypeptide is Probable protein adenylyltransferase aq_aa38 (Aquifex aeolicus (strain VF5)).